The primary structure comprises 291 residues: Nucleotide-binding protein lwe2422 (291 aa).

Residue 13 to 20 participates in ATP binding; it reads GMSGAGKT. 63 to 66 serves as a coordination point for GTP; sequence DLRG.

This sequence belongs to the RapZ-like family.

Functionally, displays ATPase and GTPase activities. The polypeptide is Nucleotide-binding protein lwe2422 (Listeria welshimeri serovar 6b (strain ATCC 35897 / DSM 20650 / CCUG 15529 / CIP 8149 / NCTC 11857 / SLCC 5334 / V8)).